A 369-amino-acid chain; its full sequence is Tetraacyldisaccharide 4'-kinase (369 aa).

68–75 is a binding site for ATP; the sequence is VVGGTGKT.

It belongs to the LpxK family.

The catalysed reaction is a lipid A disaccharide + ATP = a lipid IVA + ADP + H(+). It functions in the pathway glycolipid biosynthesis; lipid IV(A) biosynthesis; lipid IV(A) from (3R)-3-hydroxytetradecanoyl-[acyl-carrier-protein] and UDP-N-acetyl-alpha-D-glucosamine: step 6/6. Transfers the gamma-phosphate of ATP to the 4'-position of a tetraacyldisaccharide 1-phosphate intermediate (termed DS-1-P) to form tetraacyldisaccharide 1,4'-bis-phosphate (lipid IVA). This chain is Tetraacyldisaccharide 4'-kinase, found in Chlamydia muridarum (strain MoPn / Nigg).